The primary structure comprises 715 residues: DNA ligase (715 aa).

Residues 47 to 51 (DADYD), 96 to 97 (SL), and Glu-129 each bind NAD(+). The active-site N6-AMP-lysine intermediate is Lys-131. 4 residues coordinate NAD(+): Arg-152, Glu-189, Lys-306, and Lys-330. The Zn(2+) site is built by Cys-435, Cys-438, Cys-453, and Cys-459. One can recognise a BRCT domain in the interval 637–715 (KRDSAVAGKT…EDEWLALIQG (79 aa)).

The protein belongs to the NAD-dependent DNA ligase family. LigA subfamily. Requires Mg(2+) as cofactor. It depends on Mn(2+) as a cofactor.

It carries out the reaction NAD(+) + (deoxyribonucleotide)n-3'-hydroxyl + 5'-phospho-(deoxyribonucleotide)m = (deoxyribonucleotide)n+m + AMP + beta-nicotinamide D-nucleotide.. In terms of biological role, DNA ligase that catalyzes the formation of phosphodiester linkages between 5'-phosphoryl and 3'-hydroxyl groups in double-stranded DNA using NAD as a coenzyme and as the energy source for the reaction. It is essential for DNA replication and repair of damaged DNA. This Rhodopseudomonas palustris (strain BisA53) protein is DNA ligase.